Here is a 153-residue protein sequence, read N- to C-terminus: Suppressor of RNA silencing (153 aa).

Residues 1–23 (MMATFSCVCCGTSTTSTYCGKRC) are C-1. Residues 1–85 (MMATFSCVCC…IVSRFCGQKH (85 aa)) are interaction with TGB1. Residues 19-47 (CGKRCERKHVYSETRNKRLELYKKYLLEP) are basic motif (BM). Residues 60–85 (CGMPCSIAEEACDQLPIVSRFCGQKH) form a C-2 region. Residues 86 to 127 (ADLYDSLLKRSEQELLLEFLQKKMQELKLSHIVKMAKLESEV) form an interaction with replication protein alpha-A region. Positions 92 to 132 (LLKRSEQELLLEFLQKKMQELKLSHIVKMAKLESEVNAIRK) form a coiled coil. Serine 96 carries the post-translational modification Phosphoserine.

The protein belongs to the virgaviridae suppressor of RNA silencing family. In terms of assembly, homooligomer. Interacts (via C-terminus) with replication protein alpha-A. Interacts (via N-terminus) with the movement protein TGB1; this interaction targets gammab-TGB1 at the periphery of chloroplasts and plasmodesmata. Interacts with host autophagy protein ATG7; this interaction disrupts the host ATG7-ATG8 interaction to promote viral infection. Interacts (via BM region) with host STY46; this interaction inhibits the viral infection. In terms of processing, phosphorylated at Ser-96 by a host PKA-like kinase; the phosphorylation at this site seems to suppress host cell death. Post-translationally, serine-phosphorylated by host STY46 kinase.

It localises to the host chloroplast envelope. The protein localises to the host endoplasmic reticulum. The protein resides in the host cell junction. It is found in the host plasmodesma. Suppressor of RNA-mediated gene silencing, also known as post-transcriptional gene silencing (PTGS), a mechanism of plant viral defense that limits the accumulation of viral RNAs. Promotes viral cell-to-cell long distance movement by enhancing the ATPase activity of TGB1. Enhances RNA helicase activity of replication protein alpha-A. Suppresses autophagy induced by the host as a defense mechanism against viral infection. The sequence is that of Suppressor of RNA silencing from Barley stripe mosaic virus (BSMV).